The following is a 259-amino-acid chain: 7-cyano-7-deazaguanine synthase (259 aa).

32–42 (LSGGLDSVTCL) is an ATP binding site. The Zn(2+) site is built by cysteine 223, cysteine 233, cysteine 236, and cysteine 239.

Belongs to the QueC family. Requires Zn(2+) as cofactor.

The catalysed reaction is 7-carboxy-7-deazaguanine + NH4(+) + ATP = 7-cyano-7-deazaguanine + ADP + phosphate + H2O + H(+). It participates in purine metabolism; 7-cyano-7-deazaguanine biosynthesis. In terms of biological role, catalyzes the ATP-dependent conversion of 7-carboxy-7-deazaguanine (CDG) to 7-cyano-7-deazaguanine (preQ(0)). The protein is 7-cyano-7-deazaguanine synthase of Psychrobacter arcticus (strain DSM 17307 / VKM B-2377 / 273-4).